Consider the following 263-residue polypeptide: 4-hydroxy-tetrahydrodipicolinate reductase (263 aa).

Residues Gly7–Met12 and Asp33 contribute to the NAD(+) site. Arg34 serves as a coordination point for NADP(+). NAD(+) contacts are provided by residues Gly96 to Thr98 and Ala120 to Met123. The active-site Proton donor/acceptor is His153. His154 lines the (S)-2,3,4,5-tetrahydrodipicolinate pocket. Lys157 functions as the Proton donor in the catalytic mechanism. Gly163 to Thr164 contributes to the (S)-2,3,4,5-tetrahydrodipicolinate binding site.

The protein belongs to the DapB family.

It is found in the cytoplasm. The enzyme catalyses (S)-2,3,4,5-tetrahydrodipicolinate + NAD(+) + H2O = (2S,4S)-4-hydroxy-2,3,4,5-tetrahydrodipicolinate + NADH + H(+). The catalysed reaction is (S)-2,3,4,5-tetrahydrodipicolinate + NADP(+) + H2O = (2S,4S)-4-hydroxy-2,3,4,5-tetrahydrodipicolinate + NADPH + H(+). It participates in amino-acid biosynthesis; L-lysine biosynthesis via DAP pathway; (S)-tetrahydrodipicolinate from L-aspartate: step 4/4. In terms of biological role, catalyzes the conversion of 4-hydroxy-tetrahydrodipicolinate (HTPA) to tetrahydrodipicolinate. The chain is 4-hydroxy-tetrahydrodipicolinate reductase from Ralstonia nicotianae (strain ATCC BAA-1114 / GMI1000) (Ralstonia solanacearum).